A 68-amino-acid polypeptide reads, in one-letter code: Urocalcin (68 aa).

The first 27 residues, 1-27 (MKASTLVVIFIVIFITISSFSIHDVQA), serve as a signal peptide directing secretion. The propeptide occupies 28–35 (SGVEKREQ). 3 cysteine pairs are disulfide-bonded: cysteine 38/cysteine 52, cysteine 45/cysteine 56, and cysteine 51/cysteine 67. Residues 57–59 (KRR) are essential for stimulation of [3H]ryanodine binding to RYR1.

It belongs to the scorpion calcin family. As to expression, expressed by the venom gland.

It is found in the secreted. In terms of biological role, this toxin only weakly stabilizes ryanodine receptor 1 (RyR1) opening in a long-lasting subconductance state (55% of the full conductance state obtained only at high concentrations (1 uM)). In addition, it has been shown to dose-dependently stimulate ryanodine binding to RyR1 with the lowest activity of all calcins (EC(50)=376 nM). It also augments the bell-shaped calcium-[3H]ryanodine binding curve that is maximal at about 10 uM calcium concentration. It binds a different site as ryanodine. It acts synergistically with caffeine. In contrast to other calcins, it does not trigger calcium release from sarcoplasmic vesicles even at high concentration (1 uM). In vivo, intracerebroventricular injection into mice induces neurotoxic symptoms, followed by death. The polypeptide is Urocalcin (Urodacus yaschenkoi (Inland robust scorpion)).